A 304-amino-acid polypeptide reads, in one-letter code: Ribonuclease HII (304 aa).

The segment at 1-53 (MIRDTKQPIKVPAKPASRSGGKAKTVKPKTVKPKAVKAADGKAASAKASTSKA) is disordered. A compositionally biased stretch (basic residues) spans 24 to 35 (KTVKPKTVKPKA). Over residues 36–53 (VKAADGKAASAKASTSKA) the composition is skewed to low complexity. The 189-residue stretch at 96–284 (WPIAGCDEAG…VAAAWQKIEG (189 aa)) folds into the RNase H type-2 domain. Residues Asp102, Glu103, and Asp193 each contribute to the a divalent metal cation site.

Belongs to the RNase HII family. Requires Mn(2+) as cofactor. Mg(2+) serves as cofactor.

The protein resides in the cytoplasm. It carries out the reaction Endonucleolytic cleavage to 5'-phosphomonoester.. Endonuclease that specifically degrades the RNA of RNA-DNA hybrids. The sequence is that of Ribonuclease HII from Rhodopseudomonas palustris (strain ATCC BAA-98 / CGA009).